The following is a 69-amino-acid chain: uncharacterized protein (69 aa).

A helical membrane pass occupies residues 13–35; the sequence is IRSINPTLLNFINYFLLIVPQFI.

It localises to the membrane. This is an uncharacterized protein from Saccharomyces cerevisiae (strain ATCC 204508 / S288c) (Baker's yeast).